The sequence spans 343 residues: MTDPIPLHTPDRQPEDPDVALRPKSLAEFVGQAAAKDNLAVFIEAARSRGEAMDHTLFFGPPGLGKTTLAQIIARELGVGFRATSGPVIAKAGDLAALLTNLEPHDVLFIDEIHRLNPVVEEVLYPAMEDRALDLIIGEGPAARSVRIDLPPFTLIGATTRQGLLTTPLRDRFGIPVRLNFYTEEELEKVVTRGAGLMGLAIDAAGAREIARRSRGTPRVAGRLLRRVRDFAEVQKAGTVTSPIADAALTRLEVDGLGLDAMDRRYLTMIADIYKGGPVGVETLAAGLAEPRDTIEDVVEPYLIQLGLVARTARGRCLNDRGWEHLERQPPAGSQTGLFDGKS.

Residues 1–182 are large ATPase domain (RuvB-L); sequence MTDPIPLHTP…FGIPVRLNFY (182 aa). Residues L21, R22, G63, K66, T67, T68, R172, Y182, and R219 each coordinate ATP. T67 is a Mg(2+) binding site. A small ATPAse domain (RuvB-S) region spans residues 183–253; the sequence is TEEELEKVVT…IADAALTRLE (71 aa). A head domain (RuvB-H) region spans residues 256–343; sequence GLGLDAMDRR…SQTGLFDGKS (88 aa). Residues R292, R311, and R316 each contribute to the DNA site.

This sequence belongs to the RuvB family. Homohexamer. Forms an RuvA(8)-RuvB(12)-Holliday junction (HJ) complex. HJ DNA is sandwiched between 2 RuvA tetramers; dsDNA enters through RuvA and exits via RuvB. An RuvB hexamer assembles on each DNA strand where it exits the tetramer. Each RuvB hexamer is contacted by two RuvA subunits (via domain III) on 2 adjacent RuvB subunits; this complex drives branch migration. In the full resolvosome a probable DNA-RuvA(4)-RuvB(12)-RuvC(2) complex forms which resolves the HJ.

It localises to the cytoplasm. The enzyme catalyses ATP + H2O = ADP + phosphate + H(+). In terms of biological role, the RuvA-RuvB-RuvC complex processes Holliday junction (HJ) DNA during genetic recombination and DNA repair, while the RuvA-RuvB complex plays an important role in the rescue of blocked DNA replication forks via replication fork reversal (RFR). RuvA specifically binds to HJ cruciform DNA, conferring on it an open structure. The RuvB hexamer acts as an ATP-dependent pump, pulling dsDNA into and through the RuvAB complex. RuvB forms 2 homohexamers on either side of HJ DNA bound by 1 or 2 RuvA tetramers; 4 subunits per hexamer contact DNA at a time. Coordinated motions by a converter formed by DNA-disengaged RuvB subunits stimulates ATP hydrolysis and nucleotide exchange. Immobilization of the converter enables RuvB to convert the ATP-contained energy into a lever motion, pulling 2 nucleotides of DNA out of the RuvA tetramer per ATP hydrolyzed, thus driving DNA branch migration. The RuvB motors rotate together with the DNA substrate, which together with the progressing nucleotide cycle form the mechanistic basis for DNA recombination by continuous HJ branch migration. Branch migration allows RuvC to scan DNA until it finds its consensus sequence, where it cleaves and resolves cruciform DNA. The protein is Holliday junction branch migration complex subunit RuvB of Erythrobacter litoralis (strain HTCC2594).